A 376-amino-acid polypeptide reads, in one-letter code: Chaperone protein DnaJ (376 aa).

One can recognise a J domain in the interval 5 to 70 (DFYDVLGVSK…EKKQNYDNFG (66 aa)). A CR-type zinc finger spans residues 137 to 215 (GKKQDIKFST…CNGQGNKQAS (79 aa)). Positions 150, 153, 167, 170, 189, 192, 203, and 206 each coordinate Zn(2+). 4 CXXCXGXG motif repeats span residues 150–157 (CNTCNGNG), 167–174 (CTVCGGNG), 189–196 (CPQCAGSG), and 203–210 (CTDCNGQG).

The protein belongs to the DnaJ family. In terms of assembly, homodimer. Zn(2+) serves as cofactor.

The protein resides in the cytoplasm. Functionally, participates actively in the response to hyperosmotic and heat shock by preventing the aggregation of stress-denatured proteins and by disaggregating proteins, also in an autonomous, DnaK-independent fashion. Unfolded proteins bind initially to DnaJ; upon interaction with the DnaJ-bound protein, DnaK hydrolyzes its bound ATP, resulting in the formation of a stable complex. GrpE releases ADP from DnaK; ATP binding to DnaK triggers the release of the substrate protein, thus completing the reaction cycle. Several rounds of ATP-dependent interactions between DnaJ, DnaK and GrpE are required for fully efficient folding. Also involved, together with DnaK and GrpE, in the DNA replication of plasmids through activation of initiation proteins. The polypeptide is Chaperone protein DnaJ (Pelagibacter ubique (strain HTCC1062)).